Here is an 874-residue protein sequence, read N- to C-terminus: Alanine--tRNA ligase (874 aa).

Residues His565, His569, Cys666, and His670 each coordinate Zn(2+).

Belongs to the class-II aminoacyl-tRNA synthetase family. The cofactor is Zn(2+).

Its subcellular location is the cytoplasm. The catalysed reaction is tRNA(Ala) + L-alanine + ATP = L-alanyl-tRNA(Ala) + AMP + diphosphate. Its function is as follows. Catalyzes the attachment of alanine to tRNA(Ala) in a two-step reaction: alanine is first activated by ATP to form Ala-AMP and then transferred to the acceptor end of tRNA(Ala). Also edits incorrectly charged Ser-tRNA(Ala) and Gly-tRNA(Ala) via its editing domain. This is Alanine--tRNA ligase from Polynucleobacter asymbioticus (strain DSM 18221 / CIP 109841 / QLW-P1DMWA-1) (Polynucleobacter necessarius subsp. asymbioticus).